We begin with the raw amino-acid sequence, 122 residues long: Large ribosomal subunit protein uL14 (122 aa).

This sequence belongs to the universal ribosomal protein uL14 family. As to quaternary structure, part of the 50S ribosomal subunit. Forms a cluster with proteins L3 and L19. In the 70S ribosome, L14 and L19 interact and together make contacts with the 16S rRNA in bridges B5 and B8.

In terms of biological role, binds to 23S rRNA. Forms part of two intersubunit bridges in the 70S ribosome. The polypeptide is Large ribosomal subunit protein uL14 (Methylobacterium sp. (strain 4-46)).